A 434-amino-acid polypeptide reads, in one-letter code: Enolase (434 aa).

Glutamine 163 is a (2R)-2-phosphoglycerate binding site. The active-site Proton donor is glutamate 205. The Mg(2+) site is built by aspartate 242, glutamate 291, and aspartate 318. (2R)-2-phosphoglycerate is bound by residues lysine 343, arginine 372, serine 373, and lysine 394. Lysine 343 serves as the catalytic Proton acceptor.

This sequence belongs to the enolase family. Requires Mg(2+) as cofactor.

The protein resides in the cytoplasm. Its subcellular location is the secreted. It localises to the cell surface. The protein localises to the cell wall. It carries out the reaction (2R)-2-phosphoglycerate = phosphoenolpyruvate + H2O. It functions in the pathway carbohydrate degradation; glycolysis; pyruvate from D-glyceraldehyde 3-phosphate: step 4/5. Functionally, catalyzes the reversible conversion of 2-phosphoglycerate (2-PG) into phosphoenolpyruvate (PEP). It is essential for the degradation of carbohydrates via glycolysis. The chain is Enolase from Streptococcus pneumoniae serotype 2 (strain D39 / NCTC 7466).